Here is a 164-residue protein sequence, read N- to C-terminus: Ribosome maturation factor RimM (164 aa).

Positions 93–164 (DSEYYVANLN…FVVIVPPEFI (72 aa)) constitute a PRC barrel domain.

It belongs to the RimM family. In terms of assembly, binds ribosomal protein uS19.

The protein resides in the cytoplasm. In terms of biological role, an accessory protein needed during the final step in the assembly of 30S ribosomal subunit, possibly for assembly of the head region. Essential for efficient processing of 16S rRNA. May be needed both before and after RbfA during the maturation of 16S rRNA. It has affinity for free ribosomal 30S subunits but not for 70S ribosomes. This is Ribosome maturation factor RimM from Orientia tsutsugamushi (strain Boryong) (Rickettsia tsutsugamushi).